An 81-amino-acid polypeptide reads, in one-letter code: Photosystem I iron-sulfur center (81 aa).

4Fe-4S ferredoxin-type domains lie at 2 to 31 (SHSVKIYDTCIGCTQCVRACPLDVLEMVPW) and 37 to 68 (GQIASSPRTEDCVGCKRCETACPTDFLSIRVY). Residues C11, C14, C17, C21, C48, C51, C54, and C58 each contribute to the [4Fe-4S] cluster site.

As to quaternary structure, the cyanobacterial PSI reaction center is composed of one copy each of PsaA,B,C,D,E,F,I,J,K,L,M and X, and forms trimeric complexes. It depends on [4Fe-4S] cluster as a cofactor.

Its subcellular location is the cellular thylakoid membrane. The enzyme catalyses reduced [plastocyanin] + hnu + oxidized [2Fe-2S]-[ferredoxin] = oxidized [plastocyanin] + reduced [2Fe-2S]-[ferredoxin]. Its function is as follows. Apoprotein for the two 4Fe-4S centers FA and FB of photosystem I (PSI); essential for photochemical activity. FB is the terminal electron acceptor of PSI, donating electrons to ferredoxin. The C-terminus interacts with PsaA/B/D and helps assemble the protein into the PSI complex. Required for binding of PsaD and PsaE to PSI. PSI is a plastocyanin/cytochrome c6-ferredoxin oxidoreductase, converting photonic excitation into a charge separation, which transfers an electron from the donor P700 chlorophyll pair to the spectroscopically characterized acceptors A0, A1, FX, FA and FB in turn. The chain is Photosystem I iron-sulfur center from Synechococcus sp. (strain RCC307).